The chain runs to 226 residues: Aspartyl protease inhibitor (226 aa).

The first 15 residues, 1-15 (MKLLFLCALIALTAA), serve as a signal peptide directing secretion. Disordered stretches follow at residues 95 to 116 (GKKGKAVETSSEELPKAPKKPS) and 196 to 218 (EAKQTTTTEAPELPEEAPEQPNV). An intrachain disulfide couples Cys131 to Cys222.

This sequence belongs to the protease inhibitor I33 family.

Its subcellular location is the secreted. In terms of biological role, aspartyl protease inhibitor. The sequence is that of Aspartyl protease inhibitor from Parelaphostrongylus tenuis (Meningeal worm).